The following is a 529-amino-acid chain: Basal body-orientation factor 1 (529 aa).

A compositionally biased stretch (basic residues) spans 1 to 13; it reads MPSKGKDKKKGKS. The segment at 1–22 is disordered; sequence MPSKGKDKKKGKSRGKDTKKLI. 2 coiled-coil regions span residues 55–198 and 271–361; these read DTSR…LKQE and IKEK…EVER. The disordered stretch occupies residues 510–529; the sequence is GKVVLPTIPKGPQESDTGTF.

Belongs to the BBOF1 family. Interacts with MNS1 and ODF2.

The protein resides in the cytoplasm. It localises to the cytoskeleton. The protein localises to the cilium basal body. It is found in the flagellum axoneme. In terms of biological role, plays an essential role in sperm motility and male fertility by stabilizing the sperm flagellar axonemal structure. May be required for the stability of ODF2 and MANS1 proteins. Dispensable for the assembly and function of motile cilia. In Macaca fascicularis (Crab-eating macaque), this protein is Basal body-orientation factor 1.